A 143-amino-acid chain; its full sequence is UPF0201 protein Pisl_1658 (143 aa).

It belongs to the UPF0201 family.

The polypeptide is UPF0201 protein Pisl_1658 (Pyrobaculum islandicum (strain DSM 4184 / JCM 9189 / GEO3)).